We begin with the raw amino-acid sequence, 479 residues long: Tegument protein VP16 homolog (479 aa).

The protein belongs to the herpesviridae tegument protein VP16 protein family. In terms of assembly, associates with the VP16-induced complex; binding to host HCFC1 activates VP16 for association with the octamer motif-binding host protein POU2F1, to form a multiprotein-DNA complex responsible for activating transcription of the viral immediate early genes.

The protein localises to the virion tegument. The protein resides in the host nucleus. Its function is as follows. Transcriptional activator of immediate-early (IE) gene products (alpha genes). Acts as a key activator of lytic infection by initiating the lytic program through the assembly of the transcriptional regulatory VP16-induced complex composed of VP16 and two cellular factors, HCFC1 and POU2F1. VP16-induced complex represents a regulatory switch: when it is on, it promotes IE-gene expression and thus lytic infection, and when it is off, it limits IE-gene transcription favoring latent infection. May play a role in the aggregation of tegument proteins around nucleocapsids during virus morphogenesis. The polypeptide is Tegument protein VP16 homolog (Equus caballus (Horse)).